We begin with the raw amino-acid sequence, 239 residues long: Uridylate kinase (239 aa).

Lys10–Gly13 provides a ligand contact to ATP. The interval Gly18–Gly23 is involved in allosteric activation by GTP. UMP is bound at residue Gly52. ATP contacts are provided by Gly53 and Arg57. Residues Asp72 and Thr133–Thr140 contribute to the UMP site. The ATP site is built by Asn161, Tyr167, and Glu170.

This sequence belongs to the UMP kinase family. In terms of assembly, homohexamer.

Its subcellular location is the cytoplasm. It catalyses the reaction UMP + ATP = UDP + ADP. It participates in pyrimidine metabolism; CTP biosynthesis via de novo pathway; UDP from UMP (UMPK route): step 1/1. Allosterically activated by GTP. Inhibited by UTP. Catalyzes the reversible phosphorylation of UMP to UDP. This Halalkalibacterium halodurans (strain ATCC BAA-125 / DSM 18197 / FERM 7344 / JCM 9153 / C-125) (Bacillus halodurans) protein is Uridylate kinase.